Consider the following 20-residue polypeptide: SNTSHQDFHLFYGDNGMPVH.

This sequence belongs to the cytochrome c oxidase VIIb family. As to quaternary structure, component of the cytochrome c oxidase (complex IV, CIV), a multisubunit enzyme composed of 14 subunits. The complex is composed of a catalytic core of 3 subunits MT-CO1, MT-CO2 and MT-CO3, encoded in the mitochondrial DNA, and 11 supernumerary subunits COX4I, COX5A, COX5B, COX6A, COX6B, COX6C, COX7A, COX7B, COX7C, COX8 and NDUFA4, which are encoded in the nuclear genome. The complex exists as a monomer or a dimer and forms supercomplexes (SCs) in the inner mitochondrial membrane with NADH-ubiquinone oxidoreductase (complex I, CI) and ubiquinol-cytochrome c oxidoreductase (cytochrome b-c1 complex, complex III, CIII), resulting in different assemblies (supercomplex SCI(1)III(2)IV(1) and megacomplex MCI(2)III(2)IV(2)).

The protein resides in the mitochondrion inner membrane. The enzyme catalyses 4 Fe(II)-[cytochrome c] + O2 + 8 H(+)(in) = 4 Fe(III)-[cytochrome c] + 2 H2O + 4 H(+)(out). Its pathway is energy metabolism; oxidative phosphorylation. Its function is as follows. Component of the cytochrome c oxidase, the last enzyme in the mitochondrial electron transport chain which drives oxidative phosphorylation. The respiratory chain contains 3 multisubunit complexes succinate dehydrogenase (complex II, CII), ubiquinol-cytochrome c oxidoreductase (cytochrome b-c1 complex, complex III, CIII) and cytochrome c oxidase (complex IV, CIV), that cooperate to transfer electrons derived from NADH and succinate to molecular oxygen, creating an electrochemical gradient over the inner membrane that drives transmembrane transport and the ATP synthase. Cytochrome c oxidase is the component of the respiratory chain that catalyzes the reduction of oxygen to water. Electrons originating from reduced cytochrome c in the intermembrane space (IMS) are transferred via the dinuclear copper A center (CU(A)) of subunit 2 and heme A of subunit 1 to the active site in subunit 1, a binuclear center (BNC) formed by heme A3 and copper B (CU(B)). The BNC reduces molecular oxygen to 2 water molecules using 4 electrons from cytochrome c in the IMS and 4 protons from the mitochondrial matrix. This Thunnus obesus (Bigeye tuna) protein is Cytochrome c oxidase subunit 7B-heart, mitochondrial.